The sequence spans 362 residues: Class I histocompatibility antigen, Gogo-B*0101 alpha chain (362 aa).

A signal peptide spans 1–24 (MRVTAPRTLLLLLSAALALTETWA). An alpha-1 region spans residues 25–114 (GSHSMRYFDT…ALRYYNQSEA (90 aa)). The Extracellular segment spans residues 25–308 (GSHSMRYFDT…EPSSQSTIPI (284 aa)). A glycan (N-linked (GlcNAc...) asparagine) is linked at Asn-110. Residues 115-206 (GSHTIQRMFG…ENGRETLQRA (92 aa)) are alpha-2. 2 disulfides stabilise this stretch: Cys-125–Cys-188 and Cys-227–Cys-283. The tract at residues 207 to 298 (DTPKTHVTHH…GLPKPLTLRW (92 aa)) is alpha-3. One can recognise an Ig-like C1-type domain in the interval 209–295 (PKTHVTHHPI…QHEGLPKPLT (87 aa)). Positions 299–308 (EPSSQSTIPI) are connecting peptide. The chain crosses the membrane as a helical span at residues 309-332 (VGIVAGLAVLAVVVIGAVVTAVIC). Over 333–362 (RRKSSGGKGGSYSQAASSDSAQGSDVSLTA) the chain is Cytoplasmic. Positions 335-362 (KSSGGKGGSYSQAASSDSAQGSDVSLTA) are disordered. Residues 343 to 362 (SYSQAASSDSAQGSDVSLTA) show a composition bias toward low complexity. A phosphoserine mark is found at Ser-356 and Ser-359.

This sequence belongs to the MHC class I family. As to quaternary structure, heterodimer of an alpha chain and a beta chain (beta-2-microglobulin).

It localises to the membrane. Involved in the presentation of foreign antigens to the immune system. This Gorilla gorilla gorilla (Western lowland gorilla) protein is Class I histocompatibility antigen, Gogo-B*0101 alpha chain.